Reading from the N-terminus, the 25-residue chain is Neuromedin-U-25 (25 aa).

The residue at position 25 (N25) is an Asparagine amide.

Belongs to the NmU family.

Its subcellular location is the secreted. Its function is as follows. Stimulates uterine smooth muscle contraction and causes selective vasoconstriction. This chain is Neuromedin-U-25 (NMU), found in Oryctolagus cuniculus (Rabbit).